Reading from the N-terminus, the 422-residue chain is MTIIVDIIGREVLDSRGNPTVEVDVYLENGAFGRALVPSGASTGAHEAIELRDGDLRYQGKGVEKAVAAVNGEILEELGGRDARDQIAIDQAMIALDGTPNKARLGANALLGVSLAVAKAAADSLNLPLYRYIGGTQAHILPTPMMNIINGGVHADNLIDFQEFMIIPVGAPSVKEAIRYGAEIFHALKKRLKDAGYNTNVGDEGGFAPQFKSADQAIDFIMESIIACGYKPGEQIAIGLDCASTEFYKNGSYFYKGEGKCRNIAEQVDYLAQLVKSYPIVTIEDGMAEDDWEGWKLLTDTIGTKCQMVGDDLFVTNSARLRDGIKMGVGNSILIKVNQIGTLSETLDAVEVAHKAGYRAIISHRSGETEDSFIADLAVATNCGQIKTGSLARSDRLAKYNQLIRIEEMLGSQARYAGDIYR.

(2R)-2-phosphoglycerate is bound at residue Gln162. Glu204 serves as the catalytic Proton donor. Residues Asp241, Glu284, and Asp311 each contribute to the Mg(2+) site. Residues Lys336, Arg365, Ser366, and Lys387 each contribute to the (2R)-2-phosphoglycerate site. Residue Lys336 is the Proton acceptor of the active site.

It belongs to the enolase family. It depends on Mg(2+) as a cofactor.

It is found in the cytoplasm. It localises to the secreted. The protein localises to the cell surface. The enzyme catalyses (2R)-2-phosphoglycerate = phosphoenolpyruvate + H2O. It functions in the pathway carbohydrate degradation; glycolysis; pyruvate from D-glyceraldehyde 3-phosphate: step 4/5. Functionally, catalyzes the reversible conversion of 2-phosphoglycerate (2-PG) into phosphoenolpyruvate (PEP). It is essential for the degradation of carbohydrates via glycolysis. This Bartonella tribocorum (strain CIP 105476 / IBS 506) protein is Enolase.